The sequence spans 338 residues: DNA-directed RNA polymerase subunit alpha (338 aa).

Positions 1–226 (MLIAQRPSLT…ELFGLARELN (226 aa)) are alpha N-terminal domain (alpha-NTD). The alpha C-terminal domain (alpha-CTD) stretch occupies residues 243–338 (LAADLVMPIE…DAGFLETEHY (96 aa)).

This sequence belongs to the RNA polymerase alpha chain family. As to quaternary structure, homodimer. The RNAP catalytic core consists of 2 alpha, 1 beta, 1 beta' and 1 omega subunit. When a sigma factor is associated with the core the holoenzyme is formed, which can initiate transcription.

The catalysed reaction is RNA(n) + a ribonucleoside 5'-triphosphate = RNA(n+1) + diphosphate. Functionally, DNA-dependent RNA polymerase catalyzes the transcription of DNA into RNA using the four ribonucleoside triphosphates as substrates. This Streptomyces avermitilis (strain ATCC 31267 / DSM 46492 / JCM 5070 / NBRC 14893 / NCIMB 12804 / NRRL 8165 / MA-4680) protein is DNA-directed RNA polymerase subunit alpha.